Reading from the N-terminus, the 75-residue chain is Translation initiation factor IF-1, chloroplastic (75 aa).

The S1-like domain maps to 1 to 72; sequence MKKQNLIHAE…TKGRIIYRLS (72 aa).

Belongs to the IF-1 family. As to quaternary structure, component of the 30S ribosomal translation pre-initiation complex which assembles on the 30S ribosome in the order IF-2 and IF-3, IF-1 and N-formylmethionyl-tRNA(fMet); mRNA recruitment can occur at any time during PIC assembly.

Its subcellular location is the plastid. It localises to the chloroplast. Functionally, one of the essential components for the initiation of protein synthesis. Stabilizes the binding of IF-2 and IF-3 on the 30S subunit to which N-formylmethionyl-tRNA(fMet) subsequently binds. Helps modulate mRNA selection, yielding the 30S pre-initiation complex (PIC). Upon addition of the 50S ribosomal subunit IF-1, IF-2 and IF-3 are released leaving the mature 70S translation initiation complex. The polypeptide is Translation initiation factor IF-1, chloroplastic (Pinus koraiensis (Korean pine)).